Reading from the N-terminus, the 558-residue chain is UvrABC system protein C (558 aa).

Residues 12–92 (LLPGVYIFYG…IFNHKPKYNV (81 aa)) form the GIY-YIG domain. In terms of domain architecture, UVR spans 200–235 (SETLDLIEEKMKKHAKMMDFENAAKYRDLLVKFENV).

Belongs to the UvrC family. Interacts with UvrB in an incision complex.

The protein resides in the cytoplasm. In terms of biological role, the UvrABC repair system catalyzes the recognition and processing of DNA lesions. UvrC both incises the 5' and 3' sides of the lesion. The N-terminal half is responsible for the 3' incision and the C-terminal half is responsible for the 5' incision. The sequence is that of UvrABC system protein C from Pseudothermotoga lettingae (strain ATCC BAA-301 / DSM 14385 / NBRC 107922 / TMO) (Thermotoga lettingae).